A 161-amino-acid polypeptide reads, in one-letter code: Nucleotide-binding protein Pnec_0318 (161 aa).

This sequence belongs to the YajQ family.

In terms of biological role, nucleotide-binding protein. This is Nucleotide-binding protein Pnec_0318 from Polynucleobacter necessarius subsp. necessarius (strain STIR1).